We begin with the raw amino-acid sequence, 439 residues long: Protein translocase subunit SecY (439 aa).

A run of 10 helical transmembrane segments spans residues isoleucine 19–glycine 39, tyrosine 68–leucine 88, tyrosine 116–methionine 136, leucine 151–isoleucine 171, phenylalanine 176–valine 196, tryptophan 216–valine 236, valine 269–leucine 289, tryptophan 312–valine 332, valine 373–glycine 393, and lysine 396–valine 416.

Belongs to the SecY/SEC61-alpha family. In terms of assembly, component of the Sec protein translocase complex. Heterotrimer consisting of SecY, SecE and SecG subunits. The heterotrimers can form oligomers, although 1 heterotrimer is thought to be able to translocate proteins. Interacts with the ribosome. Interacts with SecDF, and other proteins may be involved. Interacts with SecA.

The protein localises to the cell membrane. Its function is as follows. The central subunit of the protein translocation channel SecYEG. Consists of two halves formed by TMs 1-5 and 6-10. These two domains form a lateral gate at the front which open onto the bilayer between TMs 2 and 7, and are clamped together by SecE at the back. The channel is closed by both a pore ring composed of hydrophobic SecY resides and a short helix (helix 2A) on the extracellular side of the membrane which forms a plug. The plug probably moves laterally to allow the channel to open. The ring and the pore may move independently. In Lactococcus lactis subsp. lactis (strain IL1403) (Streptococcus lactis), this protein is Protein translocase subunit SecY.